A 199-amino-acid chain; its full sequence is Probable GTP-binding protein EngB (199 aa).

The region spanning 28–199 (DLPEIALAGR…DSWDAILEQV (172 aa)) is the EngB-type G domain. GTP contacts are provided by residues 36-43 (GRSNVGKS), 63-67 (GKTQL), 81-84 (DVPG), 148-151 (TKAD), and 180-182 (FSS). Ser43 and Thr65 together coordinate Mg(2+).

Belongs to the TRAFAC class TrmE-Era-EngA-EngB-Septin-like GTPase superfamily. EngB GTPase family. The cofactor is Mg(2+).

Necessary for normal cell division and for the maintenance of normal septation. The sequence is that of Probable GTP-binding protein EngB from Streptococcus pyogenes serotype M3 (strain SSI-1).